The primary structure comprises 464 residues: uncharacterized protein (464 aa).

The next 12 helical transmembrane spans lie at 7–27 (VLNVFSLVMINVIAVDSLRTL), 37–57 (LVFYYIFAALTFFIPVALVAA), 94–114 (VVWYPTMLAFIAATLSYLIAP), 121–141 (FYLLGTALTLFWVFTFLNCFG), 153–173 (ASIGTLLPMIVIIVLGAVWIF), 196–216 (LSLFSAVLFGLIGMEMSAVHA), 231–251 (FYSALLIISTLSLGSLAIVIV), 282–302 (VIAVLIILGGLSGVSAWIIGP), 329–349 (VAILLTQGVIFTVLSTVFILL), 359–379 (LSDLSAQMALLVYIMMFAAAI), 401–421 (MSLISGIGIICCIAAMIVGFI), and 432–452 (FLFECFLIGGLILFVFIPWLF).

The protein belongs to the amino acid-polyamine-organocation (APC) superfamily.

It is found in the cell membrane. This is an uncharacterized protein from Legionella pneumophila subsp. pneumophila (strain Philadelphia 1 / ATCC 33152 / DSM 7513).